A 149-amino-acid polypeptide reads, in one-letter code: Calmodulin-6 (149 aa).

EF-hand domains lie at 8–43, 44–79, 81–116, and 117–149; these read DQIS…LGQN, PTEA…KMKD, DSEE…LGEK, and LSDE…MMAK. 19 residues coordinate Ca(2+): Asp21, Asp23, Asp25, Cys27, Glu32, Asp57, Asp59, Asn61, Thr63, Glu68, Asp94, Asp96, Asn98, Glu105, Asp130, Asp132, Asp134, Gln136, and Glu141.

The protein belongs to the calmodulin family. In terms of assembly, interacts with KCBP.

In terms of biological role, calmodulin mediates the control of a large number of enzymes, ion channels and other proteins by Ca(2+). Among the enzymes to be stimulated by the calmodulin-Ca(2+) complex are a number of protein kinases and phosphatases. This is Calmodulin-6 (CAM6) from Arabidopsis thaliana (Mouse-ear cress).